Here is a 657-residue protein sequence, read N- to C-terminus: Methionine--tRNA ligase (657 aa).

The short motif at Tyr13–His23 is the 'HIGH' region element. The 'KMSKS' region signature appears at Lys308–Ser312. Residue Lys311 coordinates ATP. Residues Asp557 to Lys657 enclose the tRNA-binding domain.

The protein belongs to the class-I aminoacyl-tRNA synthetase family. MetG type 2B subfamily. Homodimer.

The protein localises to the cytoplasm. It carries out the reaction tRNA(Met) + L-methionine + ATP = L-methionyl-tRNA(Met) + AMP + diphosphate. Its function is as follows. Is required not only for elongation of protein synthesis but also for the initiation of all mRNA translation through initiator tRNA(fMet) aminoacylation. This Staphylococcus aureus (strain COL) protein is Methionine--tRNA ligase.